A 772-amino-acid polypeptide reads, in one-letter code: MKLTHNFSFLLLLLLVHMSSKHILASKDSSSYVVYFGAHSHVGEITEDAMDRVKETHYDFLGSFTGSRERATDAIFYSYTKHINGFAAHLDHDLAYEISKHPEVVSVFPNKALKLHTTRSWDFLGLEHNSYVPSSSIWRKARFGEDTIIANLDTGVWPESKSFRDEGLGPIPSRWKGICQNQKDATFHCNRKLIGARYFNKGYAAAVGHLNSSFDSPRDLDGHGSHTLSTAAGDFVPGVSIFGQGNGTAKGGSPRARVAAYKVCWPPVKGNECYDADVLAAFDAAIHDGADVISVSLGGEPTSFFNDSVAIGSFHAAKKRIVVVCSAGNSGPADSTVSNVAPWQITVGASTMDREFASNLVLGNGKHYKGQSLSSTALPHAKFYPIMASVNAKAKNASALDAQLCKLGSLDPIKTKGKILVCLRGQNGRVEKGRAVALGGGIGMVLENTYVTGNDLLADPHVLPATQLTSKDSFAVSRYISQTKKPIAHITPSRTDLGLKPAPVMASFSSKGPSIVAPQILKPDITAPGVSVIAAYTGAVSPTNEQFDPRRLLFNAISGTSMSCPHISGIAGLLKTRYPSWSPAAIRSAIMTTATIMDDIPGPIQNATNMKATPFSFGAGHVQPNLAVNPGLVYDLGIKDYLNFLCSLGYNASQISVFSGNNFTCSSPKISLVNLNYPSITVPNLTSSKVTVSRTVKNVGRPSMYTVKVNNPQGVYVAVKPTSLNFTKVGEQKTFKVILVKSKGNVAKGYVFGELVWSDKKHRVRSPIVVKL.

Positions 1-25 (MKLTHNFSFLLLLLLVHMSSKHILA) are cleaved as a signal peptide. Residues 31–116 (SYVVYFGAHS…VFPNKALKLH (86 aa)) form the Inhibitor I9 domain. The Peptidase S8 domain occupies 120–628 (SWDFLGLEHN…AGHVQPNLAV (509 aa)). Catalysis depends on aspartate 153, which acts as the Charge relay system. Asparagine 211 carries an N-linked (GlcNAc...) asparagine glycan. The active-site Charge relay system is histidine 223. N-linked (GlcNAc...) asparagine glycans are attached at residues asparagine 246, asparagine 306, and asparagine 396. The PA domain maps to 398-480 (SALDAQLCKL…KDSFAVSRYI (83 aa)). The active-site Charge relay system is the serine 561. 5 N-linked (GlcNAc...) asparagine glycosylation sites follow: asparagine 606, asparagine 651, asparagine 662, asparagine 684, and asparagine 725.

The protein belongs to the peptidase S8 family. In terms of tissue distribution, expressed specifically at sites of lateral root emergence.

It localises to the secreted. Its subcellular location is the cell wall. Its function is as follows. Serine protease. Has a substrate preference for the hydrophobic residues Phe and Ala and the basic residue Asp in the P1 position, and for Asp, Leu or Ala in the P1' position. May play a role in the degradation of structural proteins in the extracellular matrix of cells located above sites of lateral root formation and thus facilitate lateral root emergence. This Arabidopsis thaliana (Mouse-ear cress) protein is Subtilisin-like protease SBT5.3 (AIR3).